A 368-amino-acid chain; its full sequence is Mitogen-activated protein kinase 7 (368 aa).

The region spanning 32–319 (YVPIKPIGRG…VTDALLHPYM (288 aa)) is the Protein kinase domain. Residues 38 to 46 (IGRGAYGVV) and Lys-61 each bind ATP. The active-site Proton acceptor is Asp-158. Thr-191 is modified (phosphothreonine). Residues 191-193 (TEY) carry the TXY motif. Phosphotyrosine is present on Tyr-193. The residue at position 196 (Thr-196) is a Phosphothreonine.

The protein belongs to the protein kinase superfamily. CMGC Ser/Thr protein kinase family. MAP kinase subfamily. In terms of assembly, interacts with MKK3. Requires Mg(2+) as cofactor. In terms of processing, dually phosphorylated on Thr-191 and Tyr-193, which activates the enzyme.

It carries out the reaction L-seryl-[protein] + ATP = O-phospho-L-seryl-[protein] + ADP + H(+). The catalysed reaction is L-threonyl-[protein] + ATP = O-phospho-L-threonyl-[protein] + ADP + H(+). Activated by threonine and tyrosine phosphorylation. Activated in response to hydrogen peroxide. Activation is triggered by MAPKKK17 and MAPKKK18 in a MKK3-dependent manner. Its function is as follows. MKK3-MPK7 module acts as a positive regulator of PR1 gene expression. This chain is Mitogen-activated protein kinase 7 (MPK7), found in Arabidopsis thaliana (Mouse-ear cress).